We begin with the raw amino-acid sequence, 251 residues long: Cell division protein ZapD (251 aa).

Belongs to the ZapD family. As to quaternary structure, interacts with FtsZ.

It is found in the cytoplasm. In terms of biological role, cell division factor that enhances FtsZ-ring assembly. Directly interacts with FtsZ and promotes bundling of FtsZ protofilaments, with a reduction in FtsZ GTPase activity. The polypeptide is Cell division protein ZapD (Burkholderia lata (strain ATCC 17760 / DSM 23089 / LMG 22485 / NCIMB 9086 / R18194 / 383)).